Reading from the N-terminus, the 225-residue chain is Adenosylcobinamide-GDP ribazoletransferase (225 aa).

The next 5 membrane-spanning stretches (helical) occupy residues Phe34 to Leu54, Asn93 to Phe113, Val116 to Leu136, Pro165 to Ile185, and Val204 to Ala224.

The protein belongs to the CobS family. Requires Mg(2+) as cofactor.

The protein resides in the cell membrane. The enzyme catalyses alpha-ribazole + adenosylcob(III)inamide-GDP = adenosylcob(III)alamin + GMP + H(+). It carries out the reaction alpha-ribazole 5'-phosphate + adenosylcob(III)inamide-GDP = adenosylcob(III)alamin 5'-phosphate + GMP + H(+). Its pathway is cofactor biosynthesis; adenosylcobalamin biosynthesis; adenosylcobalamin from cob(II)yrinate a,c-diamide: step 7/7. Its function is as follows. Joins adenosylcobinamide-GDP and alpha-ribazole to generate adenosylcobalamin (Ado-cobalamin). Also synthesizes adenosylcobalamin 5'-phosphate from adenosylcobinamide-GDP and alpha-ribazole 5'-phosphate. The polypeptide is Adenosylcobinamide-GDP ribazoletransferase (cobS1) (Archaeoglobus fulgidus (strain ATCC 49558 / DSM 4304 / JCM 9628 / NBRC 100126 / VC-16)).